The primary structure comprises 347 residues: Anthranilate phosphoribosyltransferase (347 aa).

Residues Gly88, 91–92 (GD), Thr96, 98–101 (NIST), 116–124 (KHGNRSVSS), and Ser128 contribute to the 5-phospho-alpha-D-ribose 1-diphosphate site. An anthranilate-binding site is contributed by Gly88. Ser100 lines the Mg(2+) pocket. Anthranilate is bound at residue Asn119. Residue Arg174 coordinates anthranilate. The Mg(2+) site is built by Asp232 and Glu233.

Belongs to the anthranilate phosphoribosyltransferase family. In terms of assembly, homodimer. Mg(2+) is required as a cofactor.

The catalysed reaction is N-(5-phospho-beta-D-ribosyl)anthranilate + diphosphate = 5-phospho-alpha-D-ribose 1-diphosphate + anthranilate. It functions in the pathway amino-acid biosynthesis; L-tryptophan biosynthesis; L-tryptophan from chorismate: step 2/5. Its function is as follows. Catalyzes the transfer of the phosphoribosyl group of 5-phosphorylribose-1-pyrophosphate (PRPP) to anthranilate to yield N-(5'-phosphoribosyl)-anthranilate (PRA). This chain is Anthranilate phosphoribosyltransferase, found in Shewanella sp. (strain MR-7).